The primary structure comprises 202 residues: Casparian strip membrane protein 4 (202 aa).

Over 1–40 the chain is Cytoplasmic; it reads MKSDSIAVDVPAESSSAIKGKAPLLGLARDHTGSGGYKRG. The chain crosses the membrane as a helical span at residues 41–61; it reads LSIFDFLLRLAAIVAALAAAA. At 62–90 the chain is on the extracellular side; sequence TMGTSDETLPFFTQFLQFEASYDDLPTFQ. Residues 91–111 form a helical membrane-spanning segment; it reads FFVVAIAIVTGYLVLSLPFSV. Residues 112-130 are Cytoplasmic-facing; the sequence is VTIVRPLAVAPRLLLLVLD. Residues 131 to 151 traverse the membrane as a helical segment; it reads TAALALDTAAASAAAAIVYLA. At 152 to 176 the chain is on the extracellular side; sequence HNGNTNTNWLPICQQFGDFCQKTSG. Residues 177–197 traverse the membrane as a helical segment; it reads AVVSAFASVTFLAILVVISGV. The Cytoplasmic segment spans residues 198–202; it reads SLKRP.

It belongs to the Casparian strip membrane proteins (CASP) family. Homodimer and heterodimers.

Its subcellular location is the cell membrane. Its function is as follows. Regulates membrane-cell wall junctions and localized cell wall deposition. Required for establishment of the Casparian strip membrane domain (CSD) and the subsequent formation of Casparian strips, a cell wall modification of the root endodermis that determines an apoplastic barrier between the intraorganismal apoplasm and the extraorganismal apoplasm and prevents lateral diffusion. This Arabidopsis lyrata subsp. lyrata (Lyre-leaved rock-cress) protein is Casparian strip membrane protein 4.